Reading from the N-terminus, the 133-residue chain is ATP synthase epsilon chain, chloroplastic (133 aa).

The protein belongs to the ATPase epsilon chain family. F-type ATPases have 2 components, CF(1) - the catalytic core - and CF(0) - the membrane proton channel. CF(1) has five subunits: alpha(3), beta(3), gamma(1), delta(1), epsilon(1). CF(0) has three main subunits: a, b and c.

The protein localises to the plastid. The protein resides in the chloroplast thylakoid membrane. In terms of biological role, produces ATP from ADP in the presence of a proton gradient across the membrane. This is ATP synthase epsilon chain, chloroplastic from Helianthus annuus (Common sunflower).